The chain runs to 247 residues: Zinc finger protein YPR015C (247 aa).

2 consecutive C2H2-type zinc fingers follow at residues 185 to 207 (KQCPICGKVCSRPSTLRTHYLIH) and 213 to 237 (FKCTWEHCNKSFNVKSNMLRHLRTH).

The sequence is that of Zinc finger protein YPR015C from Saccharomyces cerevisiae (strain ATCC 204508 / S288c) (Baker's yeast).